The primary structure comprises 142 residues: Hemoglobin subunit alpha (142 aa).

Ser-1 is modified (N-acetylserine). The region spanning Ser-1–Arg-142 is the Globin domain. Residue His-59 coordinates O2. His-88 provides a ligand contact to heme b.

Belongs to the globin family. As to quaternary structure, heterotetramer of two alpha chains and two beta chains. As to expression, red blood cells.

Functionally, involved in oxygen transport from gills to the various peripheral tissues. The polypeptide is Hemoglobin subunit alpha (hba) (Gymnodraco acuticeps (Antarctic dragonfish)).